We begin with the raw amino-acid sequence, 227 residues long: Octanoyltransferase (227 aa).

In terms of domain architecture, BPL/LPL catalytic spans 31–209; sequence ANTIDEIWLV…VFLSLLGGTN (179 aa). Substrate contacts are provided by residues 71–78, 139–141, and 152–154; these read RGGKITYH, SIG, and GLA. Residue Cys-170 is the Acyl-thioester intermediate of the active site.

This sequence belongs to the LipB family.

It is found in the cytoplasm. The enzyme catalyses octanoyl-[ACP] + L-lysyl-[protein] = N(6)-octanoyl-L-lysyl-[protein] + holo-[ACP] + H(+). The protein operates within protein modification; protein lipoylation via endogenous pathway; protein N(6)-(lipoyl)lysine from octanoyl-[acyl-carrier-protein]: step 1/2. In terms of biological role, catalyzes the transfer of endogenously produced octanoic acid from octanoyl-acyl-carrier-protein onto the lipoyl domains of lipoate-dependent enzymes. Lipoyl-ACP can also act as a substrate although octanoyl-ACP is likely to be the physiological substrate. The polypeptide is Octanoyltransferase (Baumannia cicadellinicola subsp. Homalodisca coagulata).